The chain runs to 222 residues: 26S proteasome non-ATPase regulatory subunit 9 (222 aa).

Positions glutamine 108–arginine 194 constitute a PDZ domain. Serine 128 bears the Phosphoserine mark.

This sequence belongs to the proteasome subunit p27 family. In terms of assembly, interacts with PSMC3. Part of a transient complex (modulator) containing PSMD9, PSMC6 and PSMC3 formed during the assembly of the 26S proteasome.

Acts as a chaperone during the assembly of the 26S proteasome, specifically of the base subcomplex of the PA700/19S regulatory complex (RC). During the base subcomplex assembly is part of an intermediate PSMD9:PSMC6:PSMC3 module, also known as modulator trimer complex; PSMD9 is released during the further base assembly process. The protein is 26S proteasome non-ATPase regulatory subunit 9 (Psmd9) of Mus musculus (Mouse).